A 542-amino-acid polypeptide reads, in one-letter code: CTP synthase (542 aa).

The tract at residues 1–265 is amidoligase domain; the sequence is MARYVFITGG…DDEVLAAFGI (265 aa). S13 contributes to the CTP binding site. S13 is a binding site for UTP. Residues 14-19 and D71 each bind ATP; that span reads SLGKGI. Residues D71 and E139 each contribute to the Mg(2+) site. CTP is bound by residues 146 to 148, 186 to 191, and K222; these read DIE and KTKPTQ. UTP contacts are provided by residues 186-191 and K222; that span reads KTKPTQ. The 251-residue stretch at 291–541 folds into the Glutamine amidotransferase type-1 domain; that stretch reads TIAIVGKYTG…IEAATEQSRL (251 aa). G353 is a binding site for L-glutamine. The active-site Nucleophile; for glutamine hydrolysis is C380. Residues 381 to 384, E404, and R469 contribute to the L-glutamine site; that span reads FGMQ. Catalysis depends on residues H514 and E516.

Belongs to the CTP synthase family. As to quaternary structure, homotetramer.

The enzyme catalyses UTP + L-glutamine + ATP + H2O = CTP + L-glutamate + ADP + phosphate + 2 H(+). The catalysed reaction is L-glutamine + H2O = L-glutamate + NH4(+). It catalyses the reaction UTP + NH4(+) + ATP = CTP + ADP + phosphate + 2 H(+). Its pathway is pyrimidine metabolism; CTP biosynthesis via de novo pathway; CTP from UDP: step 2/2. With respect to regulation, allosterically activated by GTP, when glutamine is the substrate; GTP has no effect on the reaction when ammonia is the substrate. The allosteric effector GTP functions by stabilizing the protein conformation that binds the tetrahedral intermediate(s) formed during glutamine hydrolysis. Inhibited by the product CTP, via allosteric rather than competitive inhibition. Its function is as follows. Catalyzes the ATP-dependent amination of UTP to CTP with either L-glutamine or ammonia as the source of nitrogen. Regulates intracellular CTP levels through interactions with the four ribonucleotide triphosphates. The chain is CTP synthase from Rhizobium etli (strain CIAT 652).